The chain runs to 291 residues: MKLDLGSPPESGDLYNAFINALIIAGAGNGTIKLYSTAVRDFLDFINKDPRKVTSEDLNRWISSLLNREGKVKGDEVEKKRAKSVTIRYYIIAVRRFLKWINVSVRPPIPKVRRKEVKALDEIQIQKVLNACKRTKDKLIIRLLLDTGLRANELLSVLVKDIDLENNMIRVRNTKNGEERIVFFTDETKLLLRKYIKGKKAEDKLFDLKYDTLYRKLKRLGKKVGIDLRPHILRHTFATLSLKRGINVITLQKLLGHKDIKTTQIYTHLVLDDLRNEYLKAMSSSSSKTPP.

The Core-binding (CB) domain maps to 9-102 (PESGDLYNAF…AVRRFLKWIN (94 aa)). The Tyr recombinase domain occupies 115–279 (KEVKALDEIQ…VLDDLRNEYL (165 aa)). Active-site residues include arginine 150, lysine 175, histidine 231, arginine 234, and histidine 257. Tyrosine 266 (O-(3'-phospho-DNA)-tyrosine intermediate) is an active-site residue.

It belongs to the 'phage' integrase family. XerA subfamily.

The protein resides in the cytoplasm. Site-specific tyrosine recombinase, which acts by catalyzing the cutting and rejoining of the recombining DNA molecules. Probably involved in the resolution of chromosome dimers. Binds to the dif site. In Saccharolobus solfataricus (strain ATCC 35092 / DSM 1617 / JCM 11322 / P2) (Sulfolobus solfataricus), this protein is Tyrosine recombinase XerA.